The chain runs to 406 residues: Tryptophan synthase beta chain (406 aa).

K99 carries the post-translational modification N6-(pyridoxal phosphate)lysine.

This sequence belongs to the TrpB family. As to quaternary structure, tetramer of two alpha and two beta chains. Requires pyridoxal 5'-phosphate as cofactor.

The catalysed reaction is (1S,2R)-1-C-(indol-3-yl)glycerol 3-phosphate + L-serine = D-glyceraldehyde 3-phosphate + L-tryptophan + H2O. It functions in the pathway amino-acid biosynthesis; L-tryptophan biosynthesis; L-tryptophan from chorismate: step 5/5. In terms of biological role, the beta subunit is responsible for the synthesis of L-tryptophan from indole and L-serine. The chain is Tryptophan synthase beta chain from Sinorhizobium fredii (strain NBRC 101917 / NGR234).